A 236-amino-acid polypeptide reads, in one-letter code: Mitochondrial coenzyme A diphosphatase NUDT8 (236 aa).

The 148-residue stretch at 25 to 172 folds into the Nudix hydrolase domain; sequence LRARPASAAV…HFRYTLPVFL (148 aa). Lysine 70 carries the post-translational modification N6-succinyllysine. A Nudix box motif is present at residues 70–91; the sequence is KCDPADQDVVHTALRETREELG. 2 residues coordinate Mg(2+): glutamate 85 and glutamate 89.

It belongs to the Nudix hydrolase family. Monomer. It depends on Mg(2+) as a cofactor. Mn(2+) serves as cofactor.

The protein resides in the mitochondrion. The catalysed reaction is an acyl-CoA + H2O = an acyl-4'-phosphopantetheine + adenosine 3',5'-bisphosphate + 2 H(+). The enzyme catalyses CoA + H2O = (R)-4'-phosphopantetheine + adenosine 3',5'-bisphosphate + 2 H(+). It catalyses the reaction acetyl-CoA + H2O = S-acetyl-4'-phosphopantetheine + adenosine 3',5'-bisphosphate + 2 H(+). It carries out the reaction butanoyl-CoA + H2O = S-butanoyl-4'-phosphopantetheine + adenosine 3',5'-bisphosphate + 2 H(+). The catalysed reaction is hexanoyl-CoA + H2O = hexanoyl-4'-phosphopantetheine + adenosine 3',5'-bisphosphate + 2 H(+). The enzyme catalyses octanoyl-CoA + H2O = S-octanoyl-4'-phosphopantetheine + adenosine 3',5'-bisphosphate + 2 H(+). It catalyses the reaction propanoyl-CoA + H2O = propanoyl-4'-phosphopantetheine + adenosine 3',5'-bisphosphate + 2 H(+). It carries out the reaction malonyl-CoA + H2O = malonyl-4'-phosphopantetheine + adenosine 3',5'-bisphosphate + 2 H(+). The catalysed reaction is succinyl-CoA + H2O = succinyl-4'-phosphopantetheine + adenosine 3',5'-bisphosphate + 2 H(+). The enzyme catalyses a 5'-end CoA-ribonucleoside in mRNA + H2O = a 5'-end phospho-adenosine-phospho-ribonucleoside in mRNA + (R)-4'-phosphopantetheine + 2 H(+). Acyl-CoA diphosphatase that mediates the hydrolysis of a wide range of CoA and CoA esters yielding 3',5'-ADP and the corresponding 4'-phosphopantetheine derivative as products. Hydrolyzes short- and medium-chain acyl-CoAs, exhibiting the highest activity toward free CoA, hexanoyl-CoA, and octanoyl-CoA and the lowest activity against acetyl-CoA. Exhibits decapping activity towards dpCoA-capped RNAs in vitro. In Homo sapiens (Human), this protein is Mitochondrial coenzyme A diphosphatase NUDT8 (NUDT8).